We begin with the raw amino-acid sequence, 306 residues long: NAD-dependent protein deacylase (306 aa).

In terms of domain architecture, Deacetylase sirtuin-type spans 1–305 (MNKQLKEFQE…PIALKPLIGD (305 aa)). 23–42 (GAGLSASSGLPTFRGSQGLW) provides a ligand contact to NAD(+). Residues tyrosine 67 and arginine 70 each coordinate substrate. 103 to 106 (QNVD) lines the NAD(+) pocket. Histidine 123 functions as the Proton acceptor in the catalytic mechanism. Zn(2+)-binding residues include cysteine 131, cysteine 136, cysteine 200, and cysteine 203. NAD(+)-binding positions include 243-245 (GTS), 269-271 (NTD), and alanine 291.

Belongs to the sirtuin family. Class III subfamily. It depends on Zn(2+) as a cofactor.

It is found in the mitochondrion. The enzyme catalyses N(6)-malonyl-L-lysyl-[protein] + NAD(+) + H2O = 2''-O-malonyl-ADP-D-ribose + nicotinamide + L-lysyl-[protein]. It catalyses the reaction N(6)-succinyl-L-lysyl-[protein] + NAD(+) + H2O = 2''-O-succinyl-ADP-D-ribose + nicotinamide + L-lysyl-[protein]. The catalysed reaction is N(6)-glutaryl-L-lysyl-[protein] + NAD(+) + H2O = 2''-O-glutaryl-ADP-D-ribose + nicotinamide + L-lysyl-[protein]. Its function is as follows. NAD-dependent lysine demalonylase, desuccinylase and deglutarylase that specifically removes malonyl, succinyl and glutaryl groups on target proteins. Has weak NAD-dependent protein deacetylase activity; however this activity may not be physiologically relevant in vivo. This Candida albicans (strain SC5314 / ATCC MYA-2876) (Yeast) protein is NAD-dependent protein deacylase.